Reading from the N-terminus, the 220-residue chain is MNRIFGRGKPKGPPPNLTDCISGVDSRAESVDKKIARLDAELMKYKDQMKKMRDGPSKNMVKQKAMRVLKQKRMYEGQRDQLMQQSFNMEQANYTIQTLKDTKTTVEAMKIGAKEMKKAYKNVKIDQIEDLQDQLEDMMEDANEVQEALSRSYGTPEIDEDDLEAELDALGDELLLDDDNSYLDEASSAPAIPEGAPGDRTTNRDGVLVDEFGLPQIPAT.

Residues 1–10 (MNRIFGRGKP) show a composition bias toward basic residues. Positions 1-27 (MNRIFGRGKPKGPPPNLTDCISGVDSR) are disordered. Coiled coils occupy residues 25–55 (DSRA…MRDG) and 121–153 (KNVK…SRSY). Positions 178–206 (DDNSYLDEASSAPAIPEGAPGDRTTNRDG) are disordered.

The protein belongs to the SNF7 family. In terms of assembly, probable peripherally associated component of the endosomal sorting required for transport complex III (ESCRT-III).

The protein resides in the cytoplasm. It localises to the cytosol. The protein localises to the endosome membrane. Its function is as follows. Probable peripherally associated component of the endosomal sorting required for transport complex III (ESCRT-III) which is involved in multivesicular bodies (MVBs) formation and sorting of endosomal cargo proteins into MVBs. MVBs contain intraluminal vesicles (ILVs) that are generated by invagination and scission from the limiting membrane of the endosome and mostly are delivered to lysosomes enabling degradation of membrane proteins, such as stimulated growth factor receptors, lysosomal enzymes and lipids. This chain is Charged multivesicular body protein 5 (chmp5), found in Danio rerio (Zebrafish).